The chain runs to 185 residues: Ribosome-recycling factor (185 aa).

Belongs to the RRF family.

It is found in the cytoplasm. In terms of biological role, responsible for the release of ribosomes from messenger RNA at the termination of protein biosynthesis. May increase the efficiency of translation by recycling ribosomes from one round of translation to another. The sequence is that of Ribosome-recycling factor from Shewanella pealeana (strain ATCC 700345 / ANG-SQ1).